The primary structure comprises 925 residues: ETO1-like protein 2 (925 aa).

The BTB domain maps to 207-307 (SDISFCVGSE…ECEARLAASV (101 aa)). The TPR 1 repeat unit spans residues 409–442 (ALSLHQMGCVLFERKDYKAAQFHFRLASSLGHVY). A coiled-coil region spans residues 509 to 533 (KYRAVMKFEQKQIKEAFQEIDRLIQ). TPR repeat units lie at residues 538–571 (PECL…EPNY), 664–697 (AERL…QRSF), 738–771 (GQAL…KHIR), 773–803 (RQGL…SCSK), 834–867 (TYPY…RPEL), and 869–900 (TLHL…DPNH).

Belongs to the ETO1 family. Interacts with the C-terminal domain of ACS5. Constitutively expressed in green and etiolated seedlings.

It functions in the pathway protein modification; protein ubiquitination. Functionally, potential regulator of the ethylene pathway, which acts by regulating the stability of 1-aminocyclopropane-1-carboxylate synthase (ACS) enzymes. May act as a substrate-specific adapter that connects ACS enzymes, such as ACS5, to ubiquitin ligase complexes, leading to proteasomal degradation of ACS enzymes. The sequence is that of ETO1-like protein 2 (EOL2) from Arabidopsis thaliana (Mouse-ear cress).